The primary structure comprises 157 residues: Heat shock 22 kDa protein, chloroplastic (157 aa).

Positions 40–155 constitute a sHSP domain; the sequence is GKAGHTHAPM…KPEPKRIAVT (116 aa).

Belongs to the small heat shock protein (HSP20) family.

The protein resides in the plastid. It is found in the chloroplast. In Chlamydomonas reinhardtii (Chlamydomonas smithii), this protein is Heat shock 22 kDa protein, chloroplastic.